Consider the following 340-residue polypeptide: GTP 3',8-cyclase (340 aa).

A Radical SAM core domain is found at 20-246 (RFERQYVYLR…PKALSDGPAK (227 aa)). Arginine 29 contacts GTP. Residues cysteine 36 and cysteine 40 each coordinate [4Fe-4S] cluster. S-adenosyl-L-methionine is bound at residue tyrosine 42. Cysteine 43 is a [4Fe-4S] cluster binding site. Arginine 79 lines the GTP pocket. Residue glycine 83 participates in S-adenosyl-L-methionine binding. Threonine 110 provides a ligand contact to GTP. Residue serine 134 coordinates S-adenosyl-L-methionine. Lysine 171 serves as a coordination point for GTP. S-adenosyl-L-methionine is bound at residue methionine 205. The [4Fe-4S] cluster site is built by cysteine 268 and cysteine 271. Residue 273 to 275 (RLR) participates in GTP binding. Cysteine 285 is a binding site for [4Fe-4S] cluster.

This sequence belongs to the radical SAM superfamily. MoaA family. As to quaternary structure, monomer and homodimer. It depends on [4Fe-4S] cluster as a cofactor.

The enzyme catalyses GTP + AH2 + S-adenosyl-L-methionine = (8S)-3',8-cyclo-7,8-dihydroguanosine 5'-triphosphate + 5'-deoxyadenosine + L-methionine + A + H(+). Its pathway is cofactor biosynthesis; molybdopterin biosynthesis. In terms of biological role, catalyzes the cyclization of GTP to (8S)-3',8-cyclo-7,8-dihydroguanosine 5'-triphosphate. This chain is GTP 3',8-cyclase, found in Actinobacillus pleuropneumoniae serotype 3 (strain JL03).